Reading from the N-terminus, the 176-residue chain is Large ribosomal subunit protein uL10 (176 aa).

The protein belongs to the universal ribosomal protein uL10 family. As to quaternary structure, part of the ribosomal stalk of the 50S ribosomal subunit. The N-terminus interacts with L11 and the large rRNA to form the base of the stalk. The C-terminus forms an elongated spine to which L12 dimers bind in a sequential fashion forming a multimeric L10(L12)X complex.

Forms part of the ribosomal stalk, playing a central role in the interaction of the ribosome with GTP-bound translation factors. The polypeptide is Large ribosomal subunit protein uL10 (Dehalococcoides mccartyi (strain ATCC BAA-2100 / JCM 16839 / KCTC 5957 / BAV1)).